Reading from the N-terminus, the 100-residue chain is Conantokin-G (100 aa).

The signal sequence occupies residues M1–G21. A propeptide spanning residues T22–R80 is cleaved from the precursor. Residues S52–R100 form a disordered region. Over residues S56 to T66 the composition is skewed to basic and acidic residues. Positions G61 to R80 are gamma-carboxylation recognition sequence that plays a role in the conversion of Glu to carboxy-Glu (Gla). Residue E83 coordinates a divalent metal cation. E83, E84, E87, E90, and E94 each carry 4-carboxyglutamate. Residues E87, E90, and E94 each coordinate a divalent metal cation. Residues E90 to R100 are compositionally biased toward basic and acidic residues. N97 is modified (asparagine amide).

Belongs to the conotoxin B superfamily. It depends on Ca(2+) as a cofactor. Requires Mg(2+) as cofactor. As to expression, expressed by the venom duct.

Its subcellular location is the secreted. Its function is as follows. Conantokins inhibit N-methyl-D-aspartate (NMDA) receptors. This toxin is selective for the NR2B/GRIN2B subunit. Induces sleep-like symptoms in young mice and hyperactivity in older mice. This is Conantokin-G from Conus geographus (Geography cone).